The primary structure comprises 170 residues: uncharacterized protein (170 aa).

Residues 1–15 (MFLTSPFESCIVLSS) lie on the Cytoplasmic side of the membrane. Residues 16–36 (LIAGLLFSLSTGFVGILGVFA) form a helical membrane-spanning segment. Over 37–76 (SLFETELSVSPKRLSLSSLSWPKTFWALLSSVEGVSWESS) the chain is Extracellular. A helical membrane pass occupies residues 77-97 (LFACIVGCCFAVTVIASLSAS). Residues 98-119 (RVFGTVASSFRDSSCCCDSSPA) lie on the Cytoplasmic side of the membrane. Residues 120–140 (VSVLATPATAALALLSLLLSL) form a helical membrane-spanning segment. Over 141–170 (PCWSTSTEAFTVDPSPSVFSMLANRITIGL) the chain is Extracellular.

It localises to the membrane. This is an uncharacterized protein from Saccharomyces cerevisiae (strain ATCC 204508 / S288c) (Baker's yeast).